We begin with the raw amino-acid sequence, 430 residues long: tRNA(Ile)-lysidine synthase (430 aa).

21–26 is a binding site for ATP; the sequence is SGGLDS.

This sequence belongs to the tRNA(Ile)-lysidine synthase family.

The protein resides in the cytoplasm. The catalysed reaction is cytidine(34) in tRNA(Ile2) + L-lysine + ATP = lysidine(34) in tRNA(Ile2) + AMP + diphosphate + H(+). Its function is as follows. Ligates lysine onto the cytidine present at position 34 of the AUA codon-specific tRNA(Ile) that contains the anticodon CAU, in an ATP-dependent manner. Cytidine is converted to lysidine, thus changing the amino acid specificity of the tRNA from methionine to isoleucine. This is tRNA(Ile)-lysidine synthase from Salmonella paratyphi B (strain ATCC BAA-1250 / SPB7).